Here is a 74-residue protein sequence, read N- to C-terminus: Putative membrane protein insertion efficiency factor (74 aa).

It belongs to the UPF0161 family.

It is found in the cell membrane. Could be involved in insertion of integral membrane proteins into the membrane. The chain is Putative membrane protein insertion efficiency factor from Bacillus pumilus (strain SAFR-032).